We begin with the raw amino-acid sequence, 165 residues long: UPF0178 protein Bphyt_5655 (165 aa).

Disordered stretches follow at residues Leu-115–Lys-134 and Glu-139–Glu-165.

Belongs to the UPF0178 family.

The polypeptide is UPF0178 protein Bphyt_5655 (Paraburkholderia phytofirmans (strain DSM 17436 / LMG 22146 / PsJN) (Burkholderia phytofirmans)).